Here is a 433-residue protein sequence, read N- to C-terminus: Bifunctional urease accessory protein UreEF (433 aa).

The tract at residues 1-200 is urease accessory protein UreE; it reads MKIANTFIKR…VMATAASTAS (200 aa). The urease accessory protein UreF stretch occupies residues 200 to 433; it reads SMTPSLDAGQ…ETQFSRLFRS (234 aa).

It in the N-terminal section; belongs to the UreE family. The protein in the C-terminal section; belongs to the UreF family. As to quaternary structure, ureD, UreF and UreG form a complex that acts as a GTP-hydrolysis-dependent molecular chaperone, activating the urease apoprotein by helping to assemble the nickel containing metallocenter of UreC. The UreE protein probably delivers the nickel.

Its subcellular location is the cytoplasm. In terms of biological role, involved in urease metallocenter assembly. Binds nickel. Probably functions as a nickel donor during metallocenter assembly. Required for maturation of urease via the functional incorporation of the urease nickel metallocenter. This is Bifunctional urease accessory protein UreEF (ureEF) from Bordetella bronchiseptica (Alcaligenes bronchisepticus).